Consider the following 118-residue polypeptide: Large ribosomal subunit protein uL18 (118 aa).

This sequence belongs to the universal ribosomal protein uL18 family. In terms of assembly, part of the 50S ribosomal subunit; part of the 5S rRNA/L5/L18/L25 subcomplex. Contacts the 5S and 23S rRNAs.

This is one of the proteins that bind and probably mediate the attachment of the 5S RNA into the large ribosomal subunit, where it forms part of the central protuberance. The protein is Large ribosomal subunit protein uL18 of Limosilactobacillus reuteri (strain DSM 20016) (Lactobacillus reuteri).